A 317-amino-acid polypeptide reads, in one-letter code: Actin-related protein 2/3 complex subunit 2 (317 aa).

Belongs to the ARPC2 family. Component of the Arp2/3 complex composed of arp2, act2, arc1/p41-ARC, arc2/p34-ARC, arc3/p21-ARC, arc4/p20-ARC and arc5/p16-ARC.

Its subcellular location is the cytoplasm. The protein resides in the cytoskeleton. It is found in the actin patch. Functionally, functions as actin-binding component of the Arp2/3 complex which is involved in regulation of actin polymerization and together with an activating nucleation-promoting factor (NPF) mediates the formation of branched actin networks. Seems to contact the mother actin filament. In Schizosaccharomyces pombe (strain 972 / ATCC 24843) (Fission yeast), this protein is Actin-related protein 2/3 complex subunit 2 (arc2).